A 694-amino-acid polypeptide reads, in one-letter code: 4-alpha-glucanotransferase (694 aa).

Belongs to the disproportionating enzyme family.

It is found in the cytoplasm. The catalysed reaction is Transfers a segment of a (1-&gt;4)-alpha-D-glucan to a new position in an acceptor, which may be glucose or a (1-&gt;4)-alpha-D-glucan.. In Escherichia coli (strain K12), this protein is 4-alpha-glucanotransferase (malQ).